The sequence spans 371 residues: Phospho-N-acetylmuramoyl-pentapeptide-transferase (371 aa).

Helical transmembrane passes span 25–45 (TLLA…WLIA), 77–94 (MGGL…ALWA), 136–156 (IGWQ…HPAS), 172–192 (LIPH…IVGF), 204–224 (GLAI…AYVA), 240–260 (GTGE…AFLW), 269–289 (FMGD…AFMI), 296–316 (VIVG…VGVF), and 348–368 (KVVL…LATL).

Belongs to the glycosyltransferase 4 family. MraY subfamily. Mg(2+) serves as cofactor.

Its subcellular location is the cell inner membrane. The catalysed reaction is UDP-N-acetyl-alpha-D-muramoyl-L-alanyl-gamma-D-glutamyl-meso-2,6-diaminopimeloyl-D-alanyl-D-alanine + di-trans,octa-cis-undecaprenyl phosphate = di-trans,octa-cis-undecaprenyl diphospho-N-acetyl-alpha-D-muramoyl-L-alanyl-D-glutamyl-meso-2,6-diaminopimeloyl-D-alanyl-D-alanine + UMP. It participates in cell wall biogenesis; peptidoglycan biosynthesis. Functionally, catalyzes the initial step of the lipid cycle reactions in the biosynthesis of the cell wall peptidoglycan: transfers peptidoglycan precursor phospho-MurNAc-pentapeptide from UDP-MurNAc-pentapeptide onto the lipid carrier undecaprenyl phosphate, yielding undecaprenyl-pyrophosphoryl-MurNAc-pentapeptide, known as lipid I. This Opitutus terrae (strain DSM 11246 / JCM 15787 / PB90-1) protein is Phospho-N-acetylmuramoyl-pentapeptide-transferase.